A 378-amino-acid polypeptide reads, in one-letter code: Putative glutamate--cysteine ligase 2 (378 aa).

Belongs to the glutamate--cysteine ligase type 2 family. YbdK subfamily.

The enzyme catalyses L-cysteine + L-glutamate + ATP = gamma-L-glutamyl-L-cysteine + ADP + phosphate + H(+). In terms of biological role, ATP-dependent carboxylate-amine ligase which exhibits weak glutamate--cysteine ligase activity. The chain is Putative glutamate--cysteine ligase 2 from Pseudomonas paraeruginosa (strain DSM 24068 / PA7) (Pseudomonas aeruginosa (strain PA7)).